A 495-amino-acid polypeptide reads, in one-letter code: Trimethylamine methyltransferase MttB (495 aa).

A non-standard amino acid (pyrrolysine) is located at residue Pyl334.

This sequence belongs to the trimethylamine methyltransferase family. Can form a complex with MttC.

The catalysed reaction is Co(I)-[trimethylamine-specific corrinoid protein] + trimethylamine + H(+) = methyl-Co(III)-[trimethylamine-specific corrinoid protein] + dimethylamine. The protein operates within one-carbon metabolism; methanogenesis from trimethylamine. Catalyzes the transfer of a methyl group from trimethylamine to the corrinoid cofactor of MttC. This chain is Trimethylamine methyltransferase MttB, found in Methanosarcina barkeri.